The sequence spans 718 residues: SANT and BTB domain regulator of class switch recombination (718 aa).

An SANT domain is found at 21–59; sequence DMILYPLIGIPQTINWETVARLVPGLTPKECVKRFDELK. A BTB domain is found at 147–255; it reads MVIHVCDEAK…QCIQYCHKNM (109 aa). Positions 555 to 576 are enriched in acidic residues; that stretch reads SEEEEYTTGSEVTEDEVGDEEE. Disordered stretches follow at residues 555-622 and 690-718; these read SEEE…SPFV and RASV…GRPA. Residues 580–595 show a composition bias toward basic residues; sequence KQRKKEKPKKFTKPPK. The segment covering 604 to 615 has biased composition (basic and acidic residues); sequence QKKEKTLEKSTS.

The protein belongs to the KIAA1841 family. Homodimer. Interacts (via the BTB domain) with HDAC1 and NCOR2.

In terms of biological role, negatively regulates class switch recombination or isotype switching in splenic B-cells. This chain is SANT and BTB domain regulator of class switch recombination, found in Mus musculus (Mouse).